A 154-amino-acid chain; its full sequence is Cytochrome c-550 (154 aa).

The N-terminal stretch at 1 to 20 is a signal peptide; sequence MKISIYATLAALSLALPAVA. Q21 bears the Pyrrolidone carboxylic acid mark. Heme c contacts are provided by C35, C38, H39, and M120. A propeptide spanning residues 150–154 is cleaved from the precursor; sequence EGAAN.

Binds 1 heme c group covalently per subunit.

The polypeptide is Cytochrome c-550 (cyc) (Paracoccus versutus (Thiobacillus versutus)).